Reading from the N-terminus, the 125-residue chain is UPF0231 protein in hemN 3'region (125 aa).

It belongs to the UPF0231 family.

This Mannheimia haemolytica (Pasteurella haemolytica) protein is UPF0231 protein in hemN 3'region.